Here is a 133-residue protein sequence, read N- to C-terminus: DNA-directed RNA polymerase subunit omega (133 aa).

Belongs to the RNA polymerase subunit omega family. As to quaternary structure, the RNAP catalytic core consists of 2 alpha, 1 beta, 1 beta' and 1 omega subunit. When a sigma factor is associated with the core the holoenzyme is formed, which can initiate transcription.

It catalyses the reaction RNA(n) + a ribonucleoside 5'-triphosphate = RNA(n+1) + diphosphate. Functionally, promotes RNA polymerase assembly. Latches the N- and C-terminal regions of the beta' subunit thereby facilitating its interaction with the beta and alpha subunits. The sequence is that of DNA-directed RNA polymerase subunit omega from Brucella abortus (strain S19).